The sequence spans 444 residues: Phosphoglucosamine mutase (444 aa).

Ser-102 acts as the Phosphoserine intermediate in catalysis. Residues Ser-102, Asp-241, Asp-243, and Asp-245 each coordinate Mg(2+). The residue at position 102 (Ser-102) is a Phosphoserine.

Belongs to the phosphohexose mutase family. Mg(2+) is required as a cofactor. Post-translationally, activated by phosphorylation.

It carries out the reaction alpha-D-glucosamine 1-phosphate = D-glucosamine 6-phosphate. In terms of biological role, catalyzes the conversion of glucosamine-6-phosphate to glucosamine-1-phosphate. This is Phosphoglucosamine mutase from Histophilus somni (strain 2336) (Haemophilus somnus).